A 665-amino-acid chain; its full sequence is Probable arginine--tRNA ligase, cytoplasmic (665 aa).

L-arginine-binding positions include 204 to 206, histidine 215, tyrosine 390, aspartate 394, and glutamine 418; that span reads SPN. The 'HIGH' region signature appears at 205-216; the sequence is PNIAKQMHVGHL. Residues 535-549 form an interaction with tRNA region; that stretch reads NTAVYLLYTYTRICS.

It belongs to the class-I aminoacyl-tRNA synthetase family.

It localises to the cytoplasm. The protein localises to the cytosol. The catalysed reaction is tRNA(Arg) + L-arginine + ATP = L-arginyl-tRNA(Arg) + AMP + diphosphate. Its function is as follows. Forms part of a macromolecular complex that catalyzes the attachment of specific amino acids to cognate tRNAs during protein synthesis. The sequence is that of Probable arginine--tRNA ligase, cytoplasmic from Drosophila melanogaster (Fruit fly).